The following is a 523-amino-acid chain: Na(+)/H(+) antiporter NhaB (523 aa).

The next 10 membrane-spanning stretches (helical) occupy residues 28–48 (FLII…WLLV), 51–71 (FIFT…GLLA), 89–109 (LSAN…IYFV), 137–157 (MAAF…VISI), 237–257 (FFIR…ATCV), 302–322 (AIIC…VGLI), 347–367 (TESL…AVII), 390–410 (LFYI…VGTV), 445–465 (VATP…LAPL), and 476–496 (MALP…MYLL).

The protein belongs to the NhaB Na(+)/H(+) (TC 2.A.34) antiporter family.

Its subcellular location is the cell inner membrane. It catalyses the reaction 2 Na(+)(in) + 3 H(+)(out) = 2 Na(+)(out) + 3 H(+)(in). Functionally, na(+)/H(+) antiporter that extrudes sodium in exchange for external protons. In Tolumonas auensis (strain DSM 9187 / NBRC 110442 / TA 4), this protein is Na(+)/H(+) antiporter NhaB.